The primary structure comprises 316 residues: Vacuolar morphogenesis protein 7 (316 aa).

The PX domain occupies Met-1–Asn-124. The stretch at Arg-168–Lys-186 forms a coiled coil. A t-SNARE coiled-coil homology domain is found at Met-250–Phe-312.

In terms of assembly, possibly multimeric. Associates with VAM3.

It localises to the vacuole. Essential for proper morphogenesis of the vacuole. May exist as structural reinforcement on the surface of the vacuolar membrane and be required for maintenance against rupture by osmotic pressure. The protein is Vacuolar morphogenesis protein 7 (VAM7) of Saccharomyces cerevisiae (strain ATCC 204508 / S288c) (Baker's yeast).